Reading from the N-terminus, the 520-residue chain is 2-isopropylmalate synthase (520 aa).

In terms of domain architecture, Pyruvate carboxyltransferase spans 12–274 (IRIFDTTLRD…DSAINTPRIV (263 aa)). Residues aspartate 21, histidine 209, histidine 211, and asparagine 245 each contribute to the Mn(2+) site. Positions 396–520 (RLASMTISDV…VVAGKTAAVA (125 aa)) are regulatory domain.

Belongs to the alpha-IPM synthase/homocitrate synthase family. LeuA type 1 subfamily. Homodimer. Mn(2+) is required as a cofactor.

It localises to the cytoplasm. The enzyme catalyses 3-methyl-2-oxobutanoate + acetyl-CoA + H2O = (2S)-2-isopropylmalate + CoA + H(+). It participates in amino-acid biosynthesis; L-leucine biosynthesis; L-leucine from 3-methyl-2-oxobutanoate: step 1/4. In terms of biological role, catalyzes the condensation of the acetyl group of acetyl-CoA with 3-methyl-2-oxobutanoate (2-ketoisovalerate) to form 3-carboxy-3-hydroxy-4-methylpentanoate (2-isopropylmalate). The protein is 2-isopropylmalate synthase of Xanthomonas euvesicatoria pv. vesicatoria (strain 85-10) (Xanthomonas campestris pv. vesicatoria).